Reading from the N-terminus, the 84-residue chain is M-zodatoxin-Lt2b (84 aa).

The signal sequence occupies residues 1-22; sequence MKYFVIALALAVALVCIAESTA. Residues 23-58 constitute a propeptide that is removed on maturation; that stretch reads YEVNEELENELDDLDDAAWLAVAEELQGLEDFEESR. The short motif at 55–58 is the Processing quadruplet motif element; the sequence is EESR.

Cleavage of the propeptide depends on the processing quadruplet motif (XXXR, with at least one of X being E). In terms of tissue distribution, expressed by the venom gland.

It localises to the secreted. Functionally, has antimicrobial activity against both Gram-positive and Gram-negative bacteria, and yeasts. Also has a strong hemolytic activity against rabbit erythrocytes. Causes paralysis, but is not lethal when injected into insect (M.domestica) larvae. The chain is M-zodatoxin-Lt2b from Lachesana tarabaevi (Spider).